The following is a 140-amino-acid chain: Putative pre-16S rRNA nuclease (140 aa).

This sequence belongs to the YqgF nuclease family.

The protein resides in the cytoplasm. Functionally, could be a nuclease involved in processing of the 5'-end of pre-16S rRNA. The polypeptide is Putative pre-16S rRNA nuclease (Edwardsiella ictaluri (strain 93-146)).